The chain runs to 273 residues: Phosphate import ATP-binding protein PstB (273 aa).

The ABC transporter domain maps to 27-268 (VTVRNLNFYY…PSDRRTQDYI (242 aa)). Residue 59–66 (GPSGCGKS) participates in ATP binding.

This sequence belongs to the ABC transporter superfamily. Phosphate importer (TC 3.A.1.7) family. The complex is composed of two ATP-binding proteins (PstB), two transmembrane proteins (PstC and PstA) and a solute-binding protein (PstS).

It localises to the cell inner membrane. The enzyme catalyses phosphate(out) + ATP + H2O = ADP + 2 phosphate(in) + H(+). Part of the ABC transporter complex PstSACB involved in phosphate import. Responsible for energy coupling to the transport system. The chain is Phosphate import ATP-binding protein PstB from Bradyrhizobium diazoefficiens (strain JCM 10833 / BCRC 13528 / IAM 13628 / NBRC 14792 / USDA 110).